Reading from the N-terminus, the 819-residue chain is Myosin light chain kinase 3 (819 aa).

3 disordered regions span residues 146-256 (VPWR…TPSE), 273-334 (VVSP…TPPR), and 347-462 (EMLM…EQDC). Position 152 is a phosphoserine (Ser-152). 2 stretches are compositionally biased toward basic and acidic residues: residues 158-170 (EENKERVEEEGGK) and 183-196 (DAREPGEESQKADV). Positions 307-318 (GPGPQCPGPPGL) are enriched in pro residues. 3 positions are modified to phosphoserine: Ser-355, Ser-401, and Ser-408. Residues 515–770 (VCQHEVLGGG…ATQCLKHEWL (256 aa)) form the Protein kinase domain. ATP is bound by residues 521-529 (LGGGRFGQV) and Lys-544. Asp-636 (proton acceptor) is an active-site residue.

The protein belongs to the protein kinase superfamily. CAMK Ser/Thr protein kinase family. It depends on Mg(2+) as a cofactor. In terms of processing, phosphorylated on serine residues. As to expression, restricted to heart.

Its subcellular location is the cytoplasm. The enzyme catalyses L-seryl-[myosin light chain] + ATP = O-phospho-L-seryl-[myosin light chain] + ADP + H(+). It carries out the reaction L-threonyl-[myosin light chain] + ATP = O-phospho-L-threonyl-[myosin light chain] + ADP + H(+). Its function is as follows. Kinase that phosphorylates MYL2 in vitro. Promotes sarcomere formation in cardiomyocytes and increases cardiomyocyte contractility. The sequence is that of Myosin light chain kinase 3 (MYLK3) from Homo sapiens (Human).